Here is a 93-residue protein sequence, read N- to C-terminus: Small ribosomal subunit protein uS19 (93 aa).

It belongs to the universal ribosomal protein uS19 family.

Functionally, protein S19 forms a complex with S13 that binds strongly to the 16S ribosomal RNA. The chain is Small ribosomal subunit protein uS19 from Clavibacter michiganensis subsp. michiganensis (strain NCPPB 382).